An 82-amino-acid polypeptide reads, in one-letter code: Cytotoxin 6 (82 aa).

The first 21 residues, 1–21 (MKTLLLTLVVVTIVCLDLGYT), serve as a signal peptide directing secretion. 4 cysteine pairs are disulfide-bonded: C24–C42, C35–C59, C63–C74, and C75–C80.

It belongs to the three-finger toxin family. Short-chain subfamily. Type IA cytotoxin sub-subfamily. Monomer in solution; Homodimer and oligomer in the presence of negatively charged lipids forming a pore with a size ranging between 20 and 30 Angstroms. As to expression, expressed by the venom gland.

The protein resides in the secreted. It is found in the target cell membrane. In terms of biological role, shows cytolytic activity on many different cells by forming pore in lipid membranes. In vivo, increases heart rate or kills the animal by cardiac arrest. In addition, it binds to heparin with high affinity, interacts with Kv channel-interacting protein 1 (KCNIP1) in a calcium-independent manner, and binds to integrin alpha-V/beta-3 (ITGAV/ITGB3) with moderate affinity. The chain is Cytotoxin 6 from Naja atra (Chinese cobra).